The sequence spans 540 residues: CTP synthase (540 aa).

An amidoligase domain region spans residues 1 to 270 (MNNLTSTKFI…DTQILKHFNI (270 aa)). Residue serine 18 coordinates CTP. Position 18 (serine 18) interacts with UTP. Residues 19 to 24 (SLGKGL) and aspartate 76 contribute to the ATP site. Aspartate 76 and glutamate 144 together coordinate Mg(2+). Residues 151–153 (DIE), 191–196 (KTKPTQ), and lysine 227 each bind CTP. UTP is bound by residues 191–196 (KTKPTQ) and lysine 227. A Glutamine amidotransferase type-1 domain is found at 295 to 537 (TIAIIGKYIK…VQASLNYQET (243 aa)). Glycine 356 contacts L-glutamine. Cysteine 383 functions as the Nucleophile; for glutamine hydrolysis in the catalytic mechanism. L-glutamine contacts are provided by residues 384–387 (MGMQ), glutamate 407, and arginine 462. Residues histidine 510 and glutamate 512 contribute to the active site.

This sequence belongs to the CTP synthase family. As to quaternary structure, homotetramer.

The enzyme catalyses UTP + L-glutamine + ATP + H2O = CTP + L-glutamate + ADP + phosphate + 2 H(+). It carries out the reaction L-glutamine + H2O = L-glutamate + NH4(+). The catalysed reaction is UTP + NH4(+) + ATP = CTP + ADP + phosphate + 2 H(+). The protein operates within pyrimidine metabolism; CTP biosynthesis via de novo pathway; CTP from UDP: step 2/2. Allosterically activated by GTP, when glutamine is the substrate; GTP has no effect on the reaction when ammonia is the substrate. The allosteric effector GTP functions by stabilizing the protein conformation that binds the tetrahedral intermediate(s) formed during glutamine hydrolysis. Inhibited by the product CTP, via allosteric rather than competitive inhibition. Functionally, catalyzes the ATP-dependent amination of UTP to CTP with either L-glutamine or ammonia as the source of nitrogen. Regulates intracellular CTP levels through interactions with the four ribonucleotide triphosphates. The polypeptide is CTP synthase (Ehrlichia ruminantium (strain Welgevonden)).